We begin with the raw amino-acid sequence, 212 residues long: Ribosomal RNA small subunit methyltransferase G (212 aa).

Residues G80, L85, 131 to 132 (AE), and R146 each bind S-adenosyl-L-methionine.

This sequence belongs to the methyltransferase superfamily. RNA methyltransferase RsmG family.

The protein resides in the cytoplasm. It carries out the reaction guanosine(527) in 16S rRNA + S-adenosyl-L-methionine = N(7)-methylguanosine(527) in 16S rRNA + S-adenosyl-L-homocysteine. In terms of biological role, specifically methylates the N7 position of guanine in position 527 of 16S rRNA. The sequence is that of Ribosomal RNA small subunit methyltransferase G from Xanthomonas euvesicatoria pv. vesicatoria (strain 85-10) (Xanthomonas campestris pv. vesicatoria).